Here is a 218-residue protein sequence, read N- to C-terminus: Sulfite reductase, assimilatory-type (218 aa).

Residues Cys-91, Cys-97, Cys-131, and Cys-135 each contribute to the [4Fe-4S] cluster site. Siroheme is bound at residue Cys-135.

This enzyme catalyzes the 6-electron reduction of sulfite to sulfide. This is one of several activities required for the biosynthesis of L-cysteine from sulfate. This is Sulfite reductase, assimilatory-type from Nitratidesulfovibrio vulgaris (strain ATCC 29579 / DSM 644 / CCUG 34227 / NCIMB 8303 / VKM B-1760 / Hildenborough) (Desulfovibrio vulgaris).